The primary structure comprises 538 residues: Putative cysteine ligase BshC (538 aa).

Positions I248–L268 form a coiled coil.

The protein belongs to the BshC family.

In terms of biological role, involved in bacillithiol (BSH) biosynthesis. May catalyze the last step of the pathway, the addition of cysteine to glucosamine malate (GlcN-Mal) to generate BSH. This chain is Putative cysteine ligase BshC, found in Bacillus cereus (strain ATCC 14579 / DSM 31 / CCUG 7414 / JCM 2152 / NBRC 15305 / NCIMB 9373 / NCTC 2599 / NRRL B-3711).